The primary structure comprises 491 residues: Glutamyl-tRNA(Gln) amidotransferase subunit A (491 aa).

Residues Lys77 and Ser152 each act as charge relay system in the active site. Ser176 acts as the Acyl-ester intermediate in catalysis.

It belongs to the amidase family. GatA subfamily. In terms of assembly, heterotrimer of A, B and C subunits.

It carries out the reaction L-glutamyl-tRNA(Gln) + L-glutamine + ATP + H2O = L-glutaminyl-tRNA(Gln) + L-glutamate + ADP + phosphate + H(+). Allows the formation of correctly charged Gln-tRNA(Gln) through the transamidation of misacylated Glu-tRNA(Gln) in organisms which lack glutaminyl-tRNA synthetase. The reaction takes place in the presence of glutamine and ATP through an activated gamma-phospho-Glu-tRNA(Gln). The chain is Glutamyl-tRNA(Gln) amidotransferase subunit A from Chlamydia felis (strain Fe/C-56) (Chlamydophila felis).